Here is a 378-residue protein sequence, read N- to C-terminus: Glutamate 5-kinase (378 aa).

ATP is bound at residue Lys19. Residues Ser59, Asp146, and Asn158 each coordinate substrate. Position 178 to 179 (178 to 179 (TD)) interacts with ATP. Positions 285–363 (RGSVAVDAGA…SEFERLLGYT (79 aa)) constitute a PUA domain.

It belongs to the glutamate 5-kinase family.

The protein localises to the cytoplasm. The enzyme catalyses L-glutamate + ATP = L-glutamyl 5-phosphate + ADP. The protein operates within amino-acid biosynthesis; L-proline biosynthesis; L-glutamate 5-semialdehyde from L-glutamate: step 1/2. Catalyzes the transfer of a phosphate group to glutamate to form L-glutamate 5-phosphate. The polypeptide is Glutamate 5-kinase (Polaromonas sp. (strain JS666 / ATCC BAA-500)).